A 117-amino-acid chain; its full sequence is UPF0102 protein YPN_3432 (117 aa).

The protein belongs to the UPF0102 family.

The protein is UPF0102 protein YPN_3432 of Yersinia pestis bv. Antiqua (strain Nepal516).